A 133-amino-acid chain; its full sequence is MEKTLGLHILADLYGVEFDKIDHVEDVRELLEGAVKYAGLSKLSSHFHQFYPHGATGVILLEESHISIHTWPEHGYAAIDVYTCGGKEKTFKAMEYILKVLKPKRIDEKVAERGTVPVHKEATHIEKIELETV.

Residue serine 64 is the Schiff-base intermediate with substrate; via pyruvic acid of the active site. Serine 64 carries the pyruvic acid (Ser); by autocatalysis modification. Histidine 69 functions as the Proton acceptor; for processing activity in the catalytic mechanism. Cysteine 84 acts as the Proton donor; for catalytic activity in catalysis.

Belongs to the prokaryotic AdoMetDC family. Type 1 subfamily. As to quaternary structure, heterotetramer of two alpha and two beta chains arranged as a dimer of alpha/beta heterodimers. Pyruvate serves as cofactor. In terms of processing, is synthesized initially as an inactive proenzyme. Formation of the active enzyme involves a self-maturation process in which the active site pyruvoyl group is generated from an internal serine residue via an autocatalytic post-translational modification. Two non-identical subunits are generated from the proenzyme in this reaction, and the pyruvate is formed at the N-terminus of the alpha chain, which is derived from the carboxyl end of the proenzyme. The post-translation cleavage follows an unusual pathway, termed non-hydrolytic serinolysis, in which the side chain hydroxyl group of the serine supplies its oxygen atom to form the C-terminus of the beta chain, while the remainder of the serine residue undergoes an oxidative deamination to produce ammonia and the pyruvoyl group blocking the N-terminus of the alpha chain.

It catalyses the reaction S-adenosyl-L-methionine + H(+) = S-adenosyl 3-(methylsulfanyl)propylamine + CO2. It participates in amine and polyamine biosynthesis; S-adenosylmethioninamine biosynthesis; S-adenosylmethioninamine from S-adenosyl-L-methionine: step 1/1. Functionally, catalyzes the decarboxylation of S-adenosylmethionine to S-adenosylmethioninamine (dcAdoMet), the propylamine donor required for the synthesis of the polyamines spermine and spermidine from the diamine putrescine. The polypeptide is S-adenosylmethionine decarboxylase proenzyme (Persephonella marina (strain DSM 14350 / EX-H1)).